The following is an 874-amino-acid chain: Alanine--tRNA ligase (874 aa).

Zn(2+) contacts are provided by H562, H566, C664, and H668.

Belongs to the class-II aminoacyl-tRNA synthetase family. It depends on Zn(2+) as a cofactor.

It is found in the cytoplasm. The catalysed reaction is tRNA(Ala) + L-alanine + ATP = L-alanyl-tRNA(Ala) + AMP + diphosphate. In terms of biological role, catalyzes the attachment of alanine to tRNA(Ala) in a two-step reaction: alanine is first activated by ATP to form Ala-AMP and then transferred to the acceptor end of tRNA(Ala). Also edits incorrectly charged Ser-tRNA(Ala) and Gly-tRNA(Ala) via its editing domain. The sequence is that of Alanine--tRNA ligase from Neisseria meningitidis serogroup C / serotype 2a (strain ATCC 700532 / DSM 15464 / FAM18).